We begin with the raw amino-acid sequence, 103 residues long: Large ribosomal subunit protein bL21 (103 aa).

The protein belongs to the bacterial ribosomal protein bL21 family. In terms of assembly, part of the 50S ribosomal subunit. Contacts protein L20.

In terms of biological role, this protein binds to 23S rRNA in the presence of protein L20. This is Large ribosomal subunit protein bL21 from Desulfotalea psychrophila (strain LSv54 / DSM 12343).